A 512-amino-acid chain; its full sequence is Protein spinster homolog 3 (512 aa).

The disordered stretch occupies residues 1–30 (MAGGMSAECPEPGPGGLQGQSPGPGRQCPP). A run of 12 helical transmembrane segments spans residues 50–70 (VLCY…GVLL), 84–104 (GLLQ…FGYL), 112–132 (ATMS…SFIS), 145–165 (IVGT…GDLF), 173–193 (VLAV…VLGS), 204–224 (WALR…ILLV), 260–280 (FVWS…LGFW), 309–329 (LIFG…GAEA), 343–365 (LICA…LAPT), 377–397 (GELL…SVVV), 411–431 (VGHI…SSVL), and 450–470 (FLCC…TALY). The segment at 481–512 (PVTGTPDSNDVDSNDLERQGLLSGAGASTEEP) is disordered.

It belongs to the major facilitator superfamily. Spinster (TC 2.A.1.49) family.

The protein localises to the membrane. Functionally, sphingolipid transporter. In Homo sapiens (Human), this protein is Protein spinster homolog 3 (SPNS3).